Here is a 416-residue protein sequence, read N- to C-terminus: Trifolitoxin-processing protein TfxD (416 aa).

Helical transmembrane passes span methionine 24–valine 44, valine 48–methionine 68, valine 79–alanine 99, isoleucine 114–alanine 134, serine 153–threonine 173, serine 176–alanine 196, alanine 230–alanine 250, isoleucine 255–glycine 275, valine 295–isoleucine 315, isoleucine 322–leucine 342, and valine 372–leucine 392.

The protein resides in the cell membrane. Functionally, the actions of the proteins TfxB, TfxD and TfxF are implicated in the processing of the inactive trifolitoxin (TfxA) precursor into the active peptide. This Rhizobium leguminosarum bv. trifolii protein is Trifolitoxin-processing protein TfxD (tfxD).